Reading from the N-terminus, the 66-residue chain is MFKEYKIYKFFEQVKQEAYKVVWPTKKELTASTLVVIVAVFVFSLICLVLDYGIHNIIQILLNIGK.

The chain crosses the membrane as a helical span at residues 34 to 54; the sequence is LVVIVAVFVFSLICLVLDYGI.

It belongs to the SecE/SEC61-gamma family. In terms of assembly, component of the Sec protein translocase complex. Heterotrimer consisting of SecY, SecE and SecG subunits. The heterotrimers can form oligomers, although 1 heterotrimer is thought to be able to translocate proteins. Interacts with the ribosome. Interacts with SecDF, and other proteins may be involved. Interacts with SecA.

It localises to the cell inner membrane. Essential subunit of the Sec protein translocation channel SecYEG. Clamps together the 2 halves of SecY. May contact the channel plug during translocation. The sequence is that of Protein translocase subunit SecE from Rickettsia bellii (strain RML369-C).